We begin with the raw amino-acid sequence, 520 residues long: J protein JJJ2 (520 aa).

The J domain maps to 7–71; that stretch reads TYYSVLGLPT…SSKQEYDAIL (65 aa). Disordered regions lie at residues 82–257 and 389–409; these read LGYK…DLQN and FESS…RGRP. Low complexity predominate over residues 91–100; that stretch reads QNQSNNLNQQ. Residues 152–182 are compositionally biased toward polar residues; sequence TSKNSKEQQGSQETTNTSENLQRNAKGNKNN. The span at 397 to 409 shows a compositional bias: basic and acidic residues; the sequence is ENHRSDFNLRGRP.

Its subcellular location is the cytoplasm. It is found in the nucleus. This Vanderwaltozyma polyspora (strain ATCC 22028 / DSM 70294 / BCRC 21397 / CBS 2163 / NBRC 10782 / NRRL Y-8283 / UCD 57-17) (Kluyveromyces polysporus) protein is J protein JJJ2 (JJJ2).